Here is a 304-residue protein sequence, read N- to C-terminus: Trypsin-3 (304 aa).

The region spanning 81-301 (IVGGYTCEEN…YVDWIKDTIA (221 aa)) is the Peptidase S1 domain. 5 disulfide bridges follow: C87-C217, C105-C121, C196-C263, C228-C242, and C253-C277. The active-site Charge relay system is the H120. Ca(2+) contacts are provided by E132, N134, V137, E139, and E142. The Charge relay system role is filled by D164. Residue Y211 is modified to Sulfotyrosine. S257 (charge relay system) is an active-site residue.

The protein belongs to the peptidase S1 family. Ca(2+) serves as cofactor. Detected in pancreas and pancreatic fluid (at protein level). Expressed in pancreas and brain. Detected in ileum.

Its subcellular location is the secreted. It catalyses the reaction Preferential cleavage: Arg-|-Xaa, Lys-|-Xaa.. Its activity is regulated as follows. Not inhibited by Kunitz-type trypsin inhibitors. In terms of biological role, digestive protease that cleaves proteins preferentially after an Arg residue and has proteolytic activity toward Kunitz-type trypsin inhibitors. This chain is Trypsin-3 (PRSS3), found in Homo sapiens (Human).